The sequence spans 134 residues: Thionin-2.2 (134 aa).

The signal sequence occupies residues 1–24 (MEGKTVISSLLIMSLVLAQIQVEA). Cystine bridges form between Cys27–Cys64, Cys28–Cys56, and Cys40–Cys50. Residues 71 to 134 (DILENSGDAV…GGSTAAVKSA (64 aa)) constitute a propeptide, acidic domain.

The protein belongs to the plant thionin (TC 1.C.44) family. As to expression, low basal expression in seedlings. Also detected in rosette leaves.

It is found in the secreted. Thionins are small plant proteins which are toxic to animal cells. They seem to exert their toxic effect at the level of the cell membrane. Their precise function is not known. The chain is Thionin-2.2 (THI2.2) from Arabidopsis thaliana (Mouse-ear cress).